Here is a 361-residue protein sequence, read N- to C-terminus: Phosphate acyltransferase (361 aa).

Belongs to the PlsX family. Homodimer. Probably interacts with PlsY.

It localises to the cytoplasm. The catalysed reaction is a fatty acyl-[ACP] + phosphate = an acyl phosphate + holo-[ACP]. The protein operates within lipid metabolism; phospholipid metabolism. Its function is as follows. Catalyzes the reversible formation of acyl-phosphate (acyl-PO(4)) from acyl-[acyl-carrier-protein] (acyl-ACP). This enzyme utilizes acyl-ACP as fatty acyl donor, but not acyl-CoA. This Anaeromyxobacter dehalogenans (strain 2CP-C) protein is Phosphate acyltransferase.